We begin with the raw amino-acid sequence, 292 residues long: Formamidopyrimidine-DNA glycosylase (292 aa).

Pro2 (schiff-base intermediate with DNA) is an active-site residue. Residue Glu3 is the Proton donor of the active site. Lys60 (proton donor; for beta-elimination activity) is an active-site residue. Residues His109, Arg128, and Lys173 each coordinate DNA. The FPG-type zinc finger occupies 258–292 (NVYRRTGKKCRQCKNLIERQKISGRSTHWCRKCQK). Arg282 (proton donor; for delta-elimination activity) is an active-site residue.

The protein belongs to the FPG family. As to quaternary structure, monomer. Zn(2+) serves as cofactor.

The enzyme catalyses Hydrolysis of DNA containing ring-opened 7-methylguanine residues, releasing 2,6-diamino-4-hydroxy-5-(N-methyl)formamidopyrimidine.. The catalysed reaction is 2'-deoxyribonucleotide-(2'-deoxyribose 5'-phosphate)-2'-deoxyribonucleotide-DNA = a 3'-end 2'-deoxyribonucleotide-(2,3-dehydro-2,3-deoxyribose 5'-phosphate)-DNA + a 5'-end 5'-phospho-2'-deoxyribonucleoside-DNA + H(+). Functionally, involved in base excision repair of DNA damaged by oxidation or by mutagenic agents. Acts as a DNA glycosylase that recognizes and removes damaged bases. Has a preference for oxidized purines, such as 7,8-dihydro-8-oxoguanine (8-oxoG). Has AP (apurinic/apyrimidinic) lyase activity and introduces nicks in the DNA strand. Cleaves the DNA backbone by beta-delta elimination to generate a single-strand break at the site of the removed base with both 3'- and 5'-phosphates. This chain is Formamidopyrimidine-DNA glycosylase, found in Prochlorococcus marinus subsp. pastoris (strain CCMP1986 / NIES-2087 / MED4).